We begin with the raw amino-acid sequence, 30 residues long: Elongation factor 1-delta (30 aa).

Belongs to the EF-1-beta/EF-1-delta family. As to quaternary structure, EF-1 is composed of 4 subunits: alpha, beta (1B-alpha=beta'), delta (1B-beta), and gamma (1B-gamma).

Its function is as follows. EF-1-beta and EF-1-delta stimulate the exchange of GDP bound to EF-1-alpha to GTP. This is Elongation factor 1-delta from Populus euphratica (Euphrates poplar).